The following is a 311-amino-acid chain: Geranylgeranyl transferase type-2 subunit alpha (311 aa).

The stretch at 12-43 forms a coiled coil; the sequence is EKAKAQRLKELEKIESYNKLVKSFEELREKQN. 5 PFTA repeats span residues 49 to 82, 93 to 126, 129 to 162, 164 to 197, and 206 to 239; these read ISLS…TETK, NEMK…DNCD, REMK…NIKL, DELK…YKEP, and EEFE…KSIP.

It belongs to the protein prenyltransferase subunit alpha family. In terms of assembly, heterodimer of an alpha and a beta subunit.

It catalyses the reaction geranylgeranyl diphosphate + L-cysteinyl-[protein] = S-geranylgeranyl-L-cysteinyl-[protein] + diphosphate. Catalyzes the transfer of a geranylgeranyl moiety from geranylgeranyl diphosphate to proteins with a C-terminal sequence motif -XCC or -XCXC, where both cysteines may become modified. This Dictyostelium discoideum (Social amoeba) protein is Geranylgeranyl transferase type-2 subunit alpha (rabggta).